We begin with the raw amino-acid sequence, 229 residues long: Ribosome maturation factor RimM (229 aa).

Residues 148-229 (ADEFYWVDLI…RVVVDWEADY (82 aa)) form the PRC barrel domain.

Belongs to the RimM family. As to quaternary structure, binds ribosomal protein uS19.

The protein resides in the cytoplasm. An accessory protein needed during the final step in the assembly of 30S ribosomal subunit, possibly for assembly of the head region. Essential for efficient processing of 16S rRNA. May be needed both before and after RbfA during the maturation of 16S rRNA. It has affinity for free ribosomal 30S subunits but not for 70S ribosomes. In Burkholderia pseudomallei (strain 1710b), this protein is Ribosome maturation factor RimM.